Reading from the N-terminus, the 1249-residue chain is Myosin-1 (1249 aa).

The segment at Met-1–Ala-40 is disordered. In terms of domain architecture, Myosin motor spans Ile-50–Asp-729. Gly-143–Thr-150 lines the ATP pocket. Phosphoserine is present on Ser-371. Residues Ser-418 to Ala-500 form an actin-binding region. IQ domains follow at residues His-733–Cys-753 and Ala-754–Thr-779. The 193-residue stretch at Arg-787–Lys-979 folds into the TH1 domain. 2 disordered regions span residues Asp-959–Ala-1081 and Glu-1127–Trp-1249. 2 stretches are compositionally biased toward low complexity: residues Pro-1026–Pro-1035 and Pro-1043–Arg-1061. The span at Ala-1062–Ala-1073 shows a compositional bias: pro residues. The 62-residue stretch at Ala-1074–Ala-1135 folds into the SH3 domain. Pro residues predominate over residues Thr-1137–Ala-1149. A compositionally biased stretch (low complexity) spans Pro-1150 to Ala-1170. The segment covering Val-1199 to Asn-1221 has biased composition (polar residues). The span at Ala-1222 to Arg-1235 shows a compositional bias: low complexity.

This sequence belongs to the TRAFAC class myosin-kinesin ATPase superfamily. Myosin family. As to quaternary structure, interacts (via IQ domains) with camA. Phosphorylation of the TEDS site (Ser-371) is required for the polarization of the actin cytoskeleton. Phosphorylation probably activates the myosin-I ATPase activity.

The protein localises to the cytoplasm. Its subcellular location is the cytoskeleton. It is found in the actin patch. Its function is as follows. Type-I myosin implicated in the organization of the actin cytoskeleton. Required for proper actin cytoskeleton polarization. At the cell cortex, assembles in patch-like structures together with proteins from the actin-polymerizing machinery and promotes actin assembly. Functions as actin nucleation-promoting factor (NPF) for the Arp2/3 complex. Plays an important role in polarized growth, spore germination, hyphal morphogenesis, and septal wall formation. This chain is Myosin-1 (myoA), found in Emericella nidulans (strain FGSC A4 / ATCC 38163 / CBS 112.46 / NRRL 194 / M139) (Aspergillus nidulans).